Here is a 436-residue protein sequence, read N- to C-terminus: Trigger factor (436 aa).

A PPIase FKBP-type domain is found at 161-246 (DDQLNIDFVG…VNSVAEPKLP (86 aa)).

Belongs to the FKBP-type PPIase family. Tig subfamily.

The protein resides in the cytoplasm. It catalyses the reaction [protein]-peptidylproline (omega=180) = [protein]-peptidylproline (omega=0). In terms of biological role, involved in protein export. Acts as a chaperone by maintaining the newly synthesized protein in an open conformation. Functions as a peptidyl-prolyl cis-trans isomerase. The polypeptide is Trigger factor (Pseudomonas aeruginosa (strain LESB58)).